Here is a 140-residue protein sequence, read N- to C-terminus: Anti-sigma F factor (140 aa).

The protein belongs to the anti-sigma-factor family.

It carries out the reaction L-seryl-[protein] + ATP = O-phospho-L-seryl-[protein] + ADP + H(+). The enzyme catalyses L-threonyl-[protein] + ATP = O-phospho-L-threonyl-[protein] + ADP + H(+). Its function is as follows. Binds to sigma F and blocks its ability to form an RNA polymerase holoenzyme (E-sigma F). Phosphorylates SpoIIAA on a serine residue. This phosphorylation may enable SpoIIAA to act as an anti-anti-sigma factor that counteracts SpoIIAB and thus releases sigma F from inhibition. In Clostridium perfringens (strain ATCC 13124 / DSM 756 / JCM 1290 / NCIMB 6125 / NCTC 8237 / Type A), this protein is Anti-sigma F factor.